The sequence spans 346 residues: Ferredoxin--NADP reductase 1 (346 aa).

Residues Glu-37, Lys-45, Tyr-49, Ile-89, Pro-124, Asp-287, and Ser-328 each coordinate FAD.

It belongs to the ferredoxin--NADP reductase type 2 family. Homodimer. Requires FAD as cofactor.

It carries out the reaction 2 reduced [2Fe-2S]-[ferredoxin] + NADP(+) + H(+) = 2 oxidized [2Fe-2S]-[ferredoxin] + NADPH. The polypeptide is Ferredoxin--NADP reductase 1 (Bacillus pumilus (strain SAFR-032)).